A 239-amino-acid chain; its full sequence is 7-cyano-7-deazaguanine synthase (239 aa).

13–23 (FSGGQDSTTCL) lines the ATP pocket. 4 residues coordinate Zn(2+): C192, C201, C204, and C207.

This sequence belongs to the QueC family. Requires Zn(2+) as cofactor.

The enzyme catalyses 7-carboxy-7-deazaguanine + NH4(+) + ATP = 7-cyano-7-deazaguanine + ADP + phosphate + H2O + H(+). Its pathway is purine metabolism; 7-cyano-7-deazaguanine biosynthesis. In terms of biological role, catalyzes the ATP-dependent conversion of 7-carboxy-7-deazaguanine (CDG) to 7-cyano-7-deazaguanine (preQ(0)). This is 7-cyano-7-deazaguanine synthase from Shewanella sp. (strain MR-7).